The primary structure comprises 53 residues: Insulin (53 aa).

A propeptide spans 1–30 (c peptide); sequence DVEPLLGFLSPKSGQENEVDDFPYKGQGEL. C38 and C43 are oxidised to a cystine.

Belongs to the insulin family. Heterodimer of a B chain and an A chain linked by two disulfide bonds.

It is found in the secreted. Functionally, insulin decreases blood glucose concentration. It increases cell permeability to monosaccharides, amino acids and fatty acids. It accelerates glycolysis, the pentose phosphate cycle, and glycogen synthesis in liver. The chain is Insulin (ins) from Anguilla anguilla (European freshwater eel).